Here is a 136-residue protein sequence, read N- to C-terminus: Putative pre-16S rRNA nuclease (136 aa).

The protein belongs to the YqgF nuclease family.

It is found in the cytoplasm. Could be a nuclease involved in processing of the 5'-end of pre-16S rRNA. The protein is Putative pre-16S rRNA nuclease of Francisella tularensis subsp. holarctica (strain FTNF002-00 / FTA).